Consider the following 358-residue polypeptide: Na(+)/H(+) exchange regulatory cofactor NHE-RF1 (358 aa).

Serine 2 carries the post-translational modification N-acetylserine. Phosphoserine is present on residues serine 2 and serine 46. The PDZ 1 domain maps to 14–94; that stretch reads LCCLEKGPNG…AVRLLVVDPE (81 aa). Positions 114–134 are enriched in low complexity; the sequence is QETPGQAEPAAAAEAQGAGNE. Disordered stretches follow at residues 114-192 and 269-358; these read QETP…EASG and SREA…FSNL. Basic and acidic residues predominate over residues 135–149; sequence NEPREADKSHPEQRK. Residues 154–234 form the PDZ 2 domain; the sequence is LCTMKKGPSG…ETKLLVVDRE (81 aa). 5 positions are modified to phosphoserine: serine 162, serine 269, serine 280, serine 290, and serine 291. Residues 287–306 are compositionally biased toward polar residues; it reads RSASSDTSEELNSQDSPPKQ. A Phosphothreonine modification is found at threonine 293. 3 positions are modified to phosphoserine: serine 294, serine 299, and serine 302. Low complexity predominate over residues 307-319; that stretch reads DSTAPSSTSSSDP. The segment covering 348-358 has biased composition (basic and acidic residues); it reads WSKKNELFSNL.

As to quaternary structure, homodimer, and heterodimer with NHERF2. Binds the N-termini of EZR, RDX and MSN. Binds the C-termini of PDGFRA, PDGFRB, ADRB2, NOS2 and CFTR. Binds ARHGAP17, EPI64, RACK1, OPRK1, GNAQ, CTNNB1 and PLCB3. Binds PDZK1. Interacts with CLCN3. Binds the C-terminus of PAG1. In resting T-cells, part of a PAG1-NHERF1-MSN complex which is disrupted upon TCR activation. Forms a complex with CFTR and SLC4A7. Forms a complex with SLC4A7 and ATP6V1B1. Interacts with TRPC4 (via the PDZ-binding domain). Directly interacts with HTR4. Interacts (via the PDZ 1 domain) with PODXL (via the C-terminal PDZ-binding motif DTHL); interaction is not detected in glomerular epithelium cells. Interacts (via the PDZ 1 domain) with PODXL (via the C-terminal PDZ-binding motif DTHL); the interaction take place early in the secretory pathway and is necessary for its apical membrane sorting. Interacts with SLC26A3. Interacts with MCC. Interacts with SLC34A1. Interacts (via the PDZ domains) with SLC26A6 isoform 4 and isoform 5. Interacts (via PDZ domains) with ACE2 (via PDZ-binding motif); the interaction may enhance ACE2 membrane residence. Phosphorylated on serine residues.

The protein resides in the cytoplasm. It localises to the apical cell membrane. It is found in the endomembrane system. The protein localises to the cell projection. Its subcellular location is the filopodium. The protein resides in the ruffle. It localises to the microvillus. Functionally, scaffold protein that connects plasma membrane proteins with members of the ezrin/moesin/radixin family and thereby helps to link them to the actin cytoskeleton and to regulate their surface expression. Necessary for recycling of internalized ADRB2. Was first known to play a role in the regulation of the activity and subcellular location of SLC9A3. Necessary for cAMP-mediated phosphorylation and inhibition of SLC9A3. Involved in sperm capacitation. May participate in the regulation of the chloride and bicarbonate homeostasis in spermatozoa. May enhance Wnt signaling. May participate in HTR4 targeting to microvilli. Involved in the regulation of phosphate reabsorption in the renal proximal tubules. The protein is Na(+)/H(+) exchange regulatory cofactor NHE-RF1 (NHERF1) of Macaca fascicularis (Crab-eating macaque).